A 592-amino-acid polypeptide reads, in one-letter code: Aspartate--tRNA ligase (592 aa).

E171 is a binding site for L-aspartate. Positions 195 to 198 (QLFK) are aspartate. An L-aspartate-binding site is contributed by R217. ATP is bound by residues 217–219 (RDE) and Q226. H448 is an L-aspartate binding site. ATP is bound at residue E482. L-aspartate is bound at residue R489. ATP is bound at residue 534–537 (GLDR).

This sequence belongs to the class-II aminoacyl-tRNA synthetase family. Type 1 subfamily. Homodimer.

Its subcellular location is the cytoplasm. It carries out the reaction tRNA(Asp) + L-aspartate + ATP = L-aspartyl-tRNA(Asp) + AMP + diphosphate. In terms of biological role, catalyzes the attachment of L-aspartate to tRNA(Asp) in a two-step reaction: L-aspartate is first activated by ATP to form Asp-AMP and then transferred to the acceptor end of tRNA(Asp). The chain is Aspartate--tRNA ligase from Pseudoalteromonas translucida (strain TAC 125).